We begin with the raw amino-acid sequence, 427 residues long: Ectonucleoside triphosphate diphosphohydrolase 5 (427 aa).

Residues 1–24 form the signal peptide; sequence MATSWGAVFMLIIACVGSTVFYRE. The active-site Proton acceptor is Glu171. N-linked (GlcNAc...) asparagine glycosylation is present at Asn231. 2 disulfide bridges follow: Cys271-Cys302 and Cys362-Cys376.

It belongs to the GDA1/CD39 NTPase family. Monomer; active form. Homodimer; disulfide-linked. Homodimers are enzymatically inactive. Requires Ca(2+) as cofactor. The cofactor is Mg(2+). Post-translationally, N-glycosylated; high-mannose type. In terms of tissue distribution, ubiquitous.

Its subcellular location is the endoplasmic reticulum. The protein resides in the secreted. It catalyses the reaction a ribonucleoside 5'-diphosphate + H2O = a ribonucleoside 5'-phosphate + phosphate + H(+). The enzyme catalyses GDP + H2O = GMP + phosphate + H(+). The catalysed reaction is UDP + H2O = UMP + phosphate + H(+). It carries out the reaction IDP + H2O = IMP + phosphate + H(+). It catalyses the reaction CDP + H2O = CMP + phosphate + H(+). The enzyme catalyses ADP + H2O = AMP + phosphate + H(+). It participates in protein modification; protein glycosylation. Its function is as follows. Hydrolyzes nucleoside diphosphates with a preference for GDP, IDP and UDP compared to ADP and CDP. In the lumen of the endoplasmic reticulum, hydrolyzes UDP that acts as an end-product feedback inhibitor of the UDP-Glc:glycoprotein glucosyltransferases. UMP can be transported back by an UDP-sugar antiporter to the cytosol where it is consumed to regenerate UDP-glucose. Therefore, it positively regulates protein reglucosylation by clearing UDP from the ER lumen and by promoting the regeneration of UDP-glucose. Protein reglucosylation is essential to proper glycoprotein folding and quality control in the ER. This is Ectonucleoside triphosphate diphosphohydrolase 5 (Entpd5) from Mus musculus (Mouse).